A 151-amino-acid chain; its full sequence is Ribosome maturation factor RimP (151 aa).

Belongs to the RimP family.

Its subcellular location is the cytoplasm. Its function is as follows. Required for maturation of 30S ribosomal subunits. In Thermoanaerobacter sp. (strain X514), this protein is Ribosome maturation factor RimP.